The following is an 84-amino-acid chain: Small ribosomal subunit protein bS16 (84 aa).

This sequence belongs to the bacterial ribosomal protein bS16 family.

The protein is Small ribosomal subunit protein bS16 of Cupriavidus pinatubonensis (strain JMP 134 / LMG 1197) (Cupriavidus necator (strain JMP 134)).